Consider the following 187-residue polypeptide: Peptidyl-tRNA hydrolase (187 aa).

Phe-14 is a binding site for tRNA. His-19 functions as the Proton acceptor in the catalytic mechanism. 3 residues coordinate tRNA: Tyr-64, Asn-66, and Asn-112.

It belongs to the PTH family. Monomer.

It localises to the cytoplasm. It catalyses the reaction an N-acyl-L-alpha-aminoacyl-tRNA + H2O = an N-acyl-L-amino acid + a tRNA + H(+). In terms of biological role, hydrolyzes ribosome-free peptidyl-tRNAs (with 1 or more amino acids incorporated), which drop off the ribosome during protein synthesis, or as a result of ribosome stalling. Functionally, catalyzes the release of premature peptidyl moieties from peptidyl-tRNA molecules trapped in stalled 50S ribosomal subunits, and thus maintains levels of free tRNAs and 50S ribosomes. This Oceanobacillus iheyensis (strain DSM 14371 / CIP 107618 / JCM 11309 / KCTC 3954 / HTE831) protein is Peptidyl-tRNA hydrolase.